The chain runs to 324 residues: Protein ChrB (324 aa).

In terms of biological role, together with ChrA1, this protein reduces chromate accumulation and is essential for chromate resistance, possibly as a regulatory protein. In Cupriavidus metallidurans (strain ATCC 43123 / DSM 2839 / NBRC 102507 / CH34) (Ralstonia metallidurans), this protein is Protein ChrB.